Consider the following 140-residue polypeptide: Ubiquitin-like protein ATG12 (140 aa).

The tract at residues 1–50 (MAEEPQSVLQLPTSIAAGGEGLTDVSPETTTPEPPSSAAVSPGTEEPAGD) is disordered. Low complexity predominate over residues 25-42 (VSPETTTPEPPSSAAVSP). Residue glycine 140 forms a Glycyl lysine isopeptide (Gly-Lys) (interchain with K-130 in ATG5) linkage.

The protein belongs to the ATG12 family. In terms of assembly, forms a conjugate with ATG5. Part of the minor complex composed of 4 sets of ATG12-ATG5 and ATG16L1 (400 kDa); this complex interacts with ATG3 leading to disruption of ATG7 interaction and promotion of ATG8-like proteins lipidation. Forms an 800-kDa complex composed of ATG12-ATG5 and ATG16L2. Interacts with DHX58/RIG-1, IFIH1/MDA5 and MAVS/IPS-1 in monomeric form as well as in ATG12-ATG5 conjugate. The interaction with MAVS is further enhanced upon vesicular stomatitis virus (VSV) infection. Interacts with ATG3; this interaction is essential for phosphatidylethanolamine (PE)-conjugated ATG8-like proteins formation. Interacts with ATG7. Interacts with ATG10. The ATG12-ATG5 conjugate interacts with RAB33A; this interaction is bridged by ATG16L1 and promotes ATG12-ATG5-ATG16L1 complex recruitment to phagophores. Interacts with TECPR1. Interacts with SH3BGRL. The ATG12-ATG5 conjugate interacts with PDCD6IP (via the BRO1 domain); this interaction is bridged by ATG12 and promotes multiple PDCD6IP-mediated functions such as endolysosomal trafficking, macroautophagy and exosome biogenesis. Acetylated by EP300. Ubiquitous.

The protein localises to the cytoplasm. The protein resides in the preautophagosomal structure membrane. In terms of biological role, ubiquitin-like protein involved in autophagy vesicles formation. Conjugation with ATG5 through a ubiquitin-like conjugating system involving also ATG7 as an E1-like activating enzyme and ATG10 as an E2-like conjugating enzyme, is essential for its function. The ATG12-ATG5 conjugate acts as an E3-like enzyme which is required for lipidation of ATG8 family proteins and their association to the vesicle membranes. As part of the ATG8 conjugation system with ATG5 and ATG16L1, required for recruitment of LRRK2 to stressed lysosomes and induction of LRRK2 kinase activity in response to lysosomal stress. (Microbial infection) May act as a proviral factor. In association with ATG5, negatively regulates the innate antiviral immune response by impairing the type I IFN production pathway upon vesicular stomatitis virus (VSV) infection. Required for the translation of incoming hepatitis C virus (HCV) RNA and, thereby, for the initiation of HCV replication, but not required once infection is established. In Homo sapiens (Human), this protein is Ubiquitin-like protein ATG12.